Consider the following 388-residue polypeptide: Carbamoyl phosphate synthase small chain (388 aa).

The interval 1–198 is CPSase; the sequence is MSQDLLPGVT…WPEGYAKLDK (198 aa). L-glutamine is bound by residues serine 53, glycine 250, and glycine 252. A Glutamine amidotransferase type-1 domain is found at 202-388; that stretch reads EVVVIDYGVK…RFAGLMDAAK (187 aa). The Nucleophile role is filled by cysteine 279. Residues leucine 280, glutamine 283, asparagine 321, glycine 323, and phenylalanine 324 each contribute to the L-glutamine site. Catalysis depends on residues histidine 363 and glutamate 365.

It belongs to the CarA family. As to quaternary structure, composed of two chains; the small (or glutamine) chain promotes the hydrolysis of glutamine to ammonia, which is used by the large (or ammonia) chain to synthesize carbamoyl phosphate. Tetramer of heterodimers (alpha,beta)4.

The enzyme catalyses hydrogencarbonate + L-glutamine + 2 ATP + H2O = carbamoyl phosphate + L-glutamate + 2 ADP + phosphate + 2 H(+). It catalyses the reaction L-glutamine + H2O = L-glutamate + NH4(+). The protein operates within amino-acid biosynthesis; L-arginine biosynthesis; carbamoyl phosphate from bicarbonate: step 1/1. It functions in the pathway pyrimidine metabolism; UMP biosynthesis via de novo pathway; (S)-dihydroorotate from bicarbonate: step 1/3. Its function is as follows. Small subunit of the glutamine-dependent carbamoyl phosphate synthetase (CPSase). CPSase catalyzes the formation of carbamoyl phosphate from the ammonia moiety of glutamine, carbonate, and phosphate donated by ATP, constituting the first step of 2 biosynthetic pathways, one leading to arginine and/or urea and the other to pyrimidine nucleotides. The small subunit (glutamine amidotransferase) binds and cleaves glutamine to supply the large subunit with the substrate ammonia. This chain is Carbamoyl phosphate synthase small chain, found in Caulobacter vibrioides (strain ATCC 19089 / CIP 103742 / CB 15) (Caulobacter crescentus).